The primary structure comprises 247 residues: MKKTTKKTAGGYGGSGSHKLYQRVKKKAGTITASSRRWLERHLNDPYVHQSKVDGYRSRAAYKLIEINQRYKFLKKGQKIIDLGAAPGGWCQVSGCIVGSSDEKPSVVGIDYLHVDPLPGVVMLEMDFLHSDAPQKLIDALGTKPDVVLSDMAAPTTGHRQTDHLRTIYLCEVAADFALSVLKPGGHFLAKAFQGGAENTLLTTLKQNFKTVHHVKPPASRSESVELYLLALEFKAKTERKEQLFLF.

The disordered stretch occupies residues 1–21 (MKKTTKKTAGGYGGSGSHKLY). S-adenosyl-L-methionine contacts are provided by Gly88, Trp90, Asp111, Asp127, and Asp151. The active-site Proton acceptor is the Lys191.

It belongs to the class I-like SAM-binding methyltransferase superfamily. RNA methyltransferase RlmE family.

Its subcellular location is the cytoplasm. It catalyses the reaction uridine(2552) in 23S rRNA + S-adenosyl-L-methionine = 2'-O-methyluridine(2552) in 23S rRNA + S-adenosyl-L-homocysteine + H(+). Specifically methylates the uridine in position 2552 of 23S rRNA at the 2'-O position of the ribose in the fully assembled 50S ribosomal subunit. This Bartonella henselae (strain ATCC 49882 / DSM 28221 / CCUG 30454 / Houston 1) (Rochalimaea henselae) protein is Ribosomal RNA large subunit methyltransferase E.